A 357-amino-acid chain; its full sequence is MPQTLHVHSRVKDYDILFTDHVLKTLADCLGERKQRKLLFITDQTVYHLYQTLFEEFAQQYNAFVHVCPPGGQSKSLERVSAIYDQLIAENFSKKDMIITIGGGVVGDLGGFVAATYYRGIPYIQIPTTLLSQVDSSIGGKVGVHFKGLTNMIGSIYPPEAIIISTTFLETLPQREFSCGISEMLKIGFIHDRPLFQQLRDFQKETDKQGLERLIYQSISNKKRIVEQDEFENGLRMSLNFGHTLGHAIESLCHHDFYHHGEAIAIGMVVDAKLAVSKRLLPKEDLDSLLQVFERYQLPTTLERADVSATSLFDVFKTDKKNSEQHIIFILPTETGFTTLAINKDDHQFVEKLDSLL.

Residues 104 to 108 (GVVGD), 128 to 129 (TT), K141, and 168 to 171 (FLET) contribute to the NAD(+) site. Zn(2+)-binding residues include E183, H243, and H260.

The protein belongs to the sugar phosphate cyclases superfamily. Dehydroquinate synthase family. NAD(+) serves as cofactor. Requires Co(2+) as cofactor. The cofactor is Zn(2+).

It localises to the cytoplasm. It carries out the reaction 7-phospho-2-dehydro-3-deoxy-D-arabino-heptonate = 3-dehydroquinate + phosphate. It participates in metabolic intermediate biosynthesis; chorismate biosynthesis; chorismate from D-erythrose 4-phosphate and phosphoenolpyruvate: step 2/7. In terms of biological role, catalyzes the conversion of 3-deoxy-D-arabino-heptulosonate 7-phosphate (DAHP) to dehydroquinate (DHQ). The chain is 3-dehydroquinate synthase from Streptococcus pyogenes serotype M18 (strain MGAS8232).